The following is a 155-amino-acid chain: Transcriptional repressor NrdR (155 aa).

The tract at residues 1–24 is disordered; the sequence is MRCPYCGHEDSQVKDSRPTEDGAA. Residues 3 to 34 fold into a zinc finger; it reads CPYCGHEDSQVKDSRPTEDGAAIRRRRQCEDC. Positions 7–24 are enriched in basic and acidic residues; sequence GHEDSQVKDSRPTEDGAA. Positions 49-139 constitute an ATP-cone domain; sequence VVVIKAGGTR…VYRDFTEARD (91 aa).

Belongs to the NrdR family. Zn(2+) is required as a cofactor.

Functionally, negatively regulates transcription of bacterial ribonucleotide reductase nrd genes and operons by binding to NrdR-boxes. In Sphingopyxis alaskensis (strain DSM 13593 / LMG 18877 / RB2256) (Sphingomonas alaskensis), this protein is Transcriptional repressor NrdR.